Here is a 100-residue protein sequence, read N- to C-terminus: MAERSDPLTRGLVALIRGYQVAISPLLPPACRYYPTCSQYTLEAVRRYGAIRGSWLGIRRLCRCHPWHPGGYDPVPDLPGSAPEENGRPSPDGQHSGSGG.

Residues 73-100 (DPVPDLPGSAPEENGRPSPDGQHSGSGG) are disordered.

The protein belongs to the UPF0161 family.

Its subcellular location is the cell inner membrane. Could be involved in insertion of integral membrane proteins into the membrane. This Synechococcus sp. (strain JA-3-3Ab) (Cyanobacteria bacterium Yellowstone A-Prime) protein is Putative membrane protein insertion efficiency factor.